Here is a 589-residue protein sequence, read N- to C-terminus: Complement component C8 beta chain (589 aa).

Positions 1 to 31 (MKTGAQVWRALAKSCLLCAALGCLHLPGARG) are cleaved as a signal peptide. The propeptide occupies 32–53 (EKPDFFETNAVNGSLVRSRPVR). An N-linked (GlcNAc...) asparagine glycan is attached at asparagine 43. The TSP type-1 1 domain occupies 63-116 (DCQLSTWSSWTACDPCQKKRYRHTYLLRPSQFYGELCDFSDKEVEDCVTNRACR). Disulfide bonds link cysteine 64/cysteine 99, cysteine 75/cysteine 109, cysteine 78/cysteine 115, cysteine 121/cysteine 132, cysteine 126/cysteine 145, cysteine 139/cysteine 154, and cysteine 161/cysteine 199. C-linked (Man) tryptophan glycans are attached at residues tryptophan 69 and tryptophan 72. The 36-residue stretch at 120 to 155 (RCEGFVCAQTGRCVNRRLLCNGDNDCGDQSDEANCR) folds into the LDL-receptor class A domain. Leucine 137, asparagine 140, aspartate 142, aspartate 144, aspartate 150, and glutamate 151 together coordinate Ca(2+). Positions 157-503 (IYKKCSQDME…EFQMEVSSCR (347 aa)) constitute an MACPF domain. Asparagine 242 carries N-linked (GlcNAc...) asparagine glycosylation. 4 consecutive transmembrane segments (beta stranded) span residues 251–258 (SSFKFGFK), 261–268 (GLVEFGVR), 378–385 (AGGGFQIG), and 391–398 (VYLKLGVS). Cysteine 377 and cysteine 402 are oxidised to a cystine. Threonine 417 bears the Phosphothreonine mark. Cystine bridges form between cysteine 502/cysteine 549, cysteine 504/cysteine 520, cysteine 507/cysteine 522, and cysteine 524/cysteine 533. One can recognise an EGF-like domain in the interval 504 to 534 (CAPCRNNGVPILKESRCECICPAGFQGVACE). A TSP type-1 2 domain is found at 544-587 (DGKWSCWSDWSPCSGGRKTRQRQCNNPAPQRGGSPCSGPASETL). Residues tryptophan 550 and tryptophan 553 are each glycosylated (C-linked (Man) tryptophan). Cysteine 556 and cysteine 589 are joined by a disulfide. Residues 556–589 (CSGGRKTRQRQCNNPAPQRGGSPCSGPASETLDC) form a disordered region.

Belongs to the complement C6/C7/C8/C9 family. Heterotrimer of 3 chains: alpha (C8A), beta (C8B) and gamma (C8G); the alpha and gamma chains are disulfide bonded. Component of the membrane attack complex (MAC), composed of complement C5b, C6, C7, C8A, C8B, C8G and multiple copies of the pore-forming subunit C9. N-glycosylated; contains one or two bound glycans. Not O-glycosylated.

It localises to the secreted. The protein resides in the target cell membrane. Membrane attack complex (MAC) assembly is inhibited by CD59, thereby protecting self-cells from damage during complement activation. CD59 acts by binding to the beta-haipins of C8 (C8A and C8B), forming an intermolecular beta-sheet that prevents incorporation of the multiple copies of C9 required for complete formation of the osmolytic pore. MAC assembly is also inhibited by clusterin (CLU) chaperones that inhibit polymerization of C9. In terms of biological role, component of the membrane attack complex (MAC), a multiprotein complex activated by the complement cascade, which inserts into a target cell membrane and forms a pore, leading to target cell membrane rupture and cell lysis. The MAC is initiated by proteolytic cleavage of C5 into complement C5b in response to the classical, alternative, lectin and GZMK complement pathways. The complement pathways consist in a cascade of proteins that leads to phagocytosis and breakdown of pathogens and signaling that strengthens the adaptive immune system. C8B, together with C8A and C8G, inserts into the target membrane, but does not form pores by itself. During MAC assembly, associates with C5b, C6 and C7 to form the C5b8 intermediate complex that inserts into the target membrane and traverses the bilayer increasing membrane rigidity. The sequence is that of Complement component C8 beta chain (C8b) from Rattus norvegicus (Rat).